The chain runs to 85 residues: MSEFWLCFNCCIAEQPQPKRRRRIDRSMIGEPTNFVHTAHVGSGDLFTGMNSVNSIQNQMQSKGGYGGEAMSVNVQMQLVDTKAG.

Residues cysteine 10 and cysteine 11 are each lipidated (S-palmitoyl cysteine). A CRIB domain is found at 29-42 (IGEPTNFVHTAHVG).

It belongs to the CDC42SE/SPEC family.

The protein resides in the cytoplasm. It localises to the cytoskeleton. It is found in the cell membrane. Its function is as follows. Probably involved in the organization of the actin cytoskeleton by acting downstream of CDC42, inducing actin filament assembly. This chain is CDC42 small effector protein 2 (cdc42se2), found in Danio rerio (Zebrafish).